We begin with the raw amino-acid sequence, 58 residues long: Small ribosomal subunit protein bS21 (58 aa).

Belongs to the bacterial ribosomal protein bS21 family.

This is Small ribosomal subunit protein bS21 from Prochlorococcus marinus (strain MIT 9301).